Reading from the N-terminus, the 300-residue chain is Sporulation protein SPS18 (300 aa).

One can recognise an Arf-GAP domain in the interval 11–130; it reads ENRKRLLRAK…LANEVRSNDI (120 aa). The segment at 28 to 51 adopts a C4-type zinc-finger fold; the sequence is CFECKSVNPQFVSCSFGIFICVNC.

The chain is Sporulation protein SPS18 (SPS18) from Saccharomyces cerevisiae (strain ATCC 204508 / S288c) (Baker's yeast).